The sequence spans 514 residues: 2,3-bisphosphoglycerate-independent phosphoglycerate mutase (514 aa).

Residues aspartate 14 and serine 64 each coordinate Mn(2+). Serine 64 (phosphoserine intermediate) is an active-site residue. Substrate-binding positions include histidine 125, arginine 155 to aspartate 156, arginine 187, arginine 193, arginine 263 to arginine 266, and lysine 336. Aspartate 403, histidine 407, aspartate 444, histidine 445, and histidine 463 together coordinate Mn(2+).

Belongs to the BPG-independent phosphoglycerate mutase family. As to quaternary structure, monomer. Requires Mn(2+) as cofactor.

The catalysed reaction is (2R)-2-phosphoglycerate = (2R)-3-phosphoglycerate. The protein operates within carbohydrate degradation; glycolysis; pyruvate from D-glyceraldehyde 3-phosphate: step 3/5. Its function is as follows. Catalyzes the interconversion of 2-phosphoglycerate and 3-phosphoglycerate. The sequence is that of 2,3-bisphosphoglycerate-independent phosphoglycerate mutase from Shigella dysenteriae serotype 1 (strain Sd197).